A 212-amino-acid polypeptide reads, in one-letter code: Phosphoribosylglycinamide formyltransferase (212 aa).

A N(1)-(5-phospho-beta-D-ribosyl)glycinamide-binding site is contributed by 12-14; the sequence is GTN. Residues 90–93 and asparagine 107 each bind (6R)-10-formyltetrahydrofolate; that span reads MKIL. Histidine 109 (proton donor) is an active-site residue.

Belongs to the GART family.

It catalyses the reaction N(1)-(5-phospho-beta-D-ribosyl)glycinamide + (6R)-10-formyltetrahydrofolate = N(2)-formyl-N(1)-(5-phospho-beta-D-ribosyl)glycinamide + (6S)-5,6,7,8-tetrahydrofolate + H(+). It participates in purine metabolism; IMP biosynthesis via de novo pathway; N(2)-formyl-N(1)-(5-phospho-D-ribosyl)glycinamide from N(1)-(5-phospho-D-ribosyl)glycinamide (10-formyl THF route): step 1/1. Functionally, catalyzes the transfer of a formyl group from 10-formyltetrahydrofolate to 5-phospho-ribosyl-glycinamide (GAR), producing 5-phospho-ribosyl-N-formylglycinamide (FGAR) and tetrahydrofolate. The protein is Phosphoribosylglycinamide formyltransferase of Haemophilus influenzae (strain ATCC 51907 / DSM 11121 / KW20 / Rd).